Consider the following 414-residue polypeptide: Serine hydroxymethyltransferase (414 aa).

(6S)-5,6,7,8-tetrahydrofolate-binding positions include L116 and 120 to 122; that span reads GHL. K224 carries the N6-(pyridoxal phosphate)lysine modification. (6S)-5,6,7,8-tetrahydrofolate is bound by residues E240 and 348 to 350; that span reads SPF.

It belongs to the SHMT family. In terms of assembly, homodimer. Pyridoxal 5'-phosphate serves as cofactor.

The protein resides in the cytoplasm. It catalyses the reaction (6R)-5,10-methylene-5,6,7,8-tetrahydrofolate + glycine + H2O = (6S)-5,6,7,8-tetrahydrofolate + L-serine. The protein operates within one-carbon metabolism; tetrahydrofolate interconversion. Its pathway is amino-acid biosynthesis; glycine biosynthesis; glycine from L-serine: step 1/1. In terms of biological role, catalyzes the reversible interconversion of serine and glycine with tetrahydrofolate (THF) serving as the one-carbon carrier. This reaction serves as the major source of one-carbon groups required for the biosynthesis of purines, thymidylate, methionine, and other important biomolecules. Also exhibits THF-independent aldolase activity toward beta-hydroxyamino acids, producing glycine and aldehydes, via a retro-aldol mechanism. This is Serine hydroxymethyltransferase from Campylobacter concisus (strain 13826).